Consider the following 307-residue polypeptide: Acetyl-coenzyme A carboxylase carboxyl transferase subunit beta (307 aa).

One can recognise a CoA carboxyltransferase N-terminal domain in the interval 28-297 (LWVKCPDTGQ…TPQPGTAPEP (270 aa)). A disordered region spans residues 286-307 (RRTPQPGTAPEPTTPEPLPNAA). Residues 292-307 (GTAPEPTTPEPLPNAA) show a composition bias toward pro residues.

The protein belongs to the AccD/PCCB family. Acetyl-CoA carboxylase is a heterohexamer composed of biotin carboxyl carrier protein (AccB), biotin carboxylase (AccC) and two subunits each of ACCase subunit alpha (AccA) and ACCase subunit beta (AccD).

Its subcellular location is the cytoplasm. It catalyses the reaction N(6)-carboxybiotinyl-L-lysyl-[protein] + acetyl-CoA = N(6)-biotinyl-L-lysyl-[protein] + malonyl-CoA. It functions in the pathway lipid metabolism; malonyl-CoA biosynthesis; malonyl-CoA from acetyl-CoA: step 1/1. Its function is as follows. Component of the acetyl coenzyme A carboxylase (ACC) complex. Biotin carboxylase (BC) catalyzes the carboxylation of biotin on its carrier protein (BCCP) and then the CO(2) group is transferred by the transcarboxylase to acetyl-CoA to form malonyl-CoA. The protein is Acetyl-coenzyme A carboxylase carboxyl transferase subunit beta of Methylorubrum extorquens (strain CM4 / NCIMB 13688) (Methylobacterium extorquens).